The following is a 573-amino-acid chain: Glucocorticoid modulatory element-binding protein 1 (573 aa).

The residue at position 2 (A2) is an N-acetylalanine. An SAND domain is found at 82–166 (TGTIEANEDM…RKMMDSGQID (85 aa)). Zn(2+) is bound at residue C113. The DNA site is built by K139, K143, K146, and R157. The Zn(2+) site is built by H170, C174, and C178. A coiled-coil region spans residues 321–367 (LDNRRNQVEQGEEQFLYTLTDLERQLEEQKKQGQDHRLKSQTVQNVV). The segment at 370–398 (PVSTPKPPKRPRLQRPASTTVLSPSPPVQ) is disordered.

In terms of assembly, homodimer, and heterodimer of GMEB1 and GMEB2. GMEB1 and GMEB2 form the parvovirus initiator complex (PIF). Interacts with the glucocorticoid receptor (NR3C1) and NCOA2/TIF2. May interact with HSP27 and CREB-binding protein (CBP).

The protein localises to the nucleus. Its subcellular location is the cytoplasm. In terms of biological role, trans-acting factor that binds to glucocorticoid modulatory elements (GME) present in the TAT (tyrosine aminotransferase) promoter and increases sensitivity to low concentrations of glucocorticoids. Also binds to the transferrin receptor promoter. Essential auxiliary factor for the replication of parvoviruses. This Homo sapiens (Human) protein is Glucocorticoid modulatory element-binding protein 1 (GMEB1).